A 27-amino-acid chain; its full sequence is Endoglucanase gh5 (27 aa).

Glu-6 serves as the catalytic Nucleophile.

The catalysed reaction is Endohydrolysis of (1-&gt;4)-beta-D-glucosidic linkages in cellulose, lichenin and cereal beta-D-glucans.. With respect to regulation, activity is stimulated by zinc ions, potassium ions and DTT. Activity is inhibited by manganese and chloride ions. In terms of biological role, endoglucanase (EG) that cleaves the internal beta-1,4-glucosidic bonds in cellulose. The sequence is that of Endoglucanase gh5 from Fomes meliae (Fomitopsis meliae).